We begin with the raw amino-acid sequence, 220 residues long: MRPLIVASLPIKKIEDLKLIENFLDADLIELRLDYLREREVSLISDYYEFLDKYKKKLIVTLRDKGEGGINQLADELKIKILNELYERQYLYDIEVSFLQKYDIPYDNRIVSVHYFNYLPTLEKIKEIVSKFSEKAFSVKIAVPSLKGYKEVLLPLLEYENVTVIPMSNNSLERIAVGLLGSKLVYSYAIEPLAQGQLYYKKVIQIFNYINDITTSSLVT.

3-dehydroquinate contacts are provided by residues Ser-8, 30 to 32 (ELR), and Arg-63. Catalysis depends on His-114, which acts as the Proton donor/acceptor. Lys-140 functions as the Schiff-base intermediate with substrate in the catalytic mechanism. 3-dehydroquinate is bound by residues Arg-174 and Gln-197.

The protein belongs to the type-I 3-dehydroquinase family. Homodimer.

The catalysed reaction is 3-dehydroquinate = 3-dehydroshikimate + H2O. It functions in the pathway metabolic intermediate biosynthesis; chorismate biosynthesis; chorismate from D-erythrose 4-phosphate and phosphoenolpyruvate: step 3/7. Involved in the third step of the chorismate pathway, which leads to the biosynthesis of aromatic amino acids. Catalyzes the cis-dehydration of 3-dehydroquinate (DHQ) and introduces the first double bond of the aromatic ring to yield 3-dehydroshikimate. The chain is 3-dehydroquinate dehydratase from Saccharolobus solfataricus (strain ATCC 35092 / DSM 1617 / JCM 11322 / P2) (Sulfolobus solfataricus).